Reading from the N-terminus, the 575-residue chain is Putative diflavin flavoprotein A 4 (575 aa).

Positions 41 to 234 (QRGTTANSYL…LGARSYAPGH (194 aa)) are zinc metallo-hydrolase. A Flavodoxin-like domain is found at 263–405 (VALLYTSAYG…AGATFAQTLK (143 aa)). A flavodoxin-reductase-like region spans residues 429–575 (VGRIIGSLCV…AVEHRKSGSH (147 aa)).

It in the N-terminal section; belongs to the zinc metallo-hydrolase group 3 family. This sequence in the C-terminal section; belongs to the flavodoxin reductase family. Fe cation is required as a cofactor.

In terms of biological role, mediates electron transfer from NADH to oxygen, reducing it to water. This modular protein has 3 redox cofactors, in other organisms the same activity requires 2 or 3 proteins. The polypeptide is Putative diflavin flavoprotein A 4 (dfa4) (Nostoc sp. (strain PCC 7120 / SAG 25.82 / UTEX 2576)).